The primary structure comprises 367 residues: Probable butyrate kinase (367 aa).

It belongs to the acetokinase family.

Its subcellular location is the cytoplasm. It catalyses the reaction butanoate + ATP = butanoyl phosphate + ADP. The sequence is that of Probable butyrate kinase from Bacillus cereus (strain ATCC 14579 / DSM 31 / CCUG 7414 / JCM 2152 / NBRC 15305 / NCIMB 9373 / NCTC 2599 / NRRL B-3711).